Consider the following 100-residue polypeptide: Signal recognition particle 19 kDa protein (100 aa).

The protein belongs to the SRP19 family. As to quaternary structure, part of the signal recognition particle protein translocation system, which is composed of SRP and FtsY. Archaeal SRP consists of a 7S RNA molecule of 300 nucleotides and two protein subunits: SRP54 and SRP19.

The protein localises to the cytoplasm. Involved in targeting and insertion of nascent membrane proteins into the cytoplasmic membrane. Binds directly to 7S RNA and mediates binding of the 54 kDa subunit of the SRP. The polypeptide is Signal recognition particle 19 kDa protein (Pyrococcus furiosus (strain ATCC 43587 / DSM 3638 / JCM 8422 / Vc1)).